The chain runs to 241 residues: Biosynthetic peptidoglycan transglycosylase (241 aa).

A helical membrane pass occupies residues 19–39 (AILAVLGVWIAGILLFSVMPV).

Belongs to the glycosyltransferase 51 family.

The protein localises to the cell inner membrane. It carries out the reaction [GlcNAc-(1-&gt;4)-Mur2Ac(oyl-L-Ala-gamma-D-Glu-L-Lys-D-Ala-D-Ala)](n)-di-trans,octa-cis-undecaprenyl diphosphate + beta-D-GlcNAc-(1-&gt;4)-Mur2Ac(oyl-L-Ala-gamma-D-Glu-L-Lys-D-Ala-D-Ala)-di-trans,octa-cis-undecaprenyl diphosphate = [GlcNAc-(1-&gt;4)-Mur2Ac(oyl-L-Ala-gamma-D-Glu-L-Lys-D-Ala-D-Ala)](n+1)-di-trans,octa-cis-undecaprenyl diphosphate + di-trans,octa-cis-undecaprenyl diphosphate + H(+). It participates in cell wall biogenesis; peptidoglycan biosynthesis. Peptidoglycan polymerase that catalyzes glycan chain elongation from lipid-linked precursors. This chain is Biosynthetic peptidoglycan transglycosylase, found in Cronobacter sakazakii (strain ATCC BAA-894) (Enterobacter sakazakii).